A 191-amino-acid polypeptide reads, in one-letter code: Rubrerythrin (191 aa).

In terms of domain architecture, Ferritin-like diiron spans 1–146; the sequence is MKSLKGSRTE…DFARNIKEGR (146 aa). Glu-20, Glu-53, Glu-94, Glu-97, Glu-128, His-131, Cys-158, Cys-161, Cys-174, and Cys-177 together coordinate Fe(3+). The Rubredoxin-like domain occupies 153-191; that stretch reads ATKWRCRNCGYVHEGTGAPELCPACAHPKAHFELLGINW.

In terms of assembly, homodimer. Possesses two rubredoxin-like centers and two non-sulfur oxo-bridged di-iron centers per dimer. It depends on Fe(3+) as a cofactor.

The protein resides in the cytoplasm. Its function is as follows. May provide oxidative stress protection via catalytic reduction of intracellular hydrogen peroxide. This Nitratidesulfovibrio vulgaris (strain ATCC 29579 / DSM 644 / CCUG 34227 / NCIMB 8303 / VKM B-1760 / Hildenborough) (Desulfovibrio vulgaris) protein is Rubrerythrin (rbr).